The chain runs to 786 residues: Cas scaffolding protein family member 4 (786 aa).

The region spanning 11–73 (PKALLARALY…PANRLQILTE (63 aa)) is the SH3 domain. Residues serine 200 and serine 249 each carry the phosphoserine modification. A disordered region spans residues 262 to 295 (SFAEESRPHALPSSSSTFYNPPSGRSRSLTPQLN). A compositionally biased stretch (polar residues) spans 273-295 (PSSSSTFYNPPSGRSRSLTPQLN). The residue at position 305 (serine 305) is a Phosphoserine. 2 disordered regions span residues 361–429 (QAGK…SEES) and 612–670 (IQPP…ERKP). Residues 364 to 373 (KELEKAKEVS) show a composition bias toward basic and acidic residues. Residues 374 to 391 (ENSAGHNSSWFSRRTTSP) are compositionally biased toward polar residues. Phosphoserine is present on residues serine 376 and serine 390. Over residues 399-427 (SGSSSDSRASIVSSCSTTSTDDSSSSSSE) the composition is skewed to low complexity. A compositionally biased stretch (basic and acidic residues) spans 630 to 642 (KQREDEHSSELLK).

The protein belongs to the CAS family. Interacts (via SH3 domain) with PTK2/FAK1 (via C-terminus). Phosphorylated on tyrosines by SRC. In terms of tissue distribution, expressed abundantly in lung and spleen. Also highly expressed in ovarian and leukemia cell lines.

The protein localises to the cytoplasm. It is found in the cytoskeleton. The protein resides in the cell junction. Its subcellular location is the focal adhesion. Docking protein that plays a role in tyrosine kinase-based signaling related to cell adhesion and cell spreading. Regulates PTK2/FAK1 activity, focal adhesion integrity, and cell spreading. This is Cas scaffolding protein family member 4 (CASS4) from Homo sapiens (Human).